We begin with the raw amino-acid sequence, 249 residues long: Protein ZPS1 (249 aa).

A signal peptide spans 1–20; sequence MKFSSGKSIIFATIASLALS. Asn-28, Asn-57, Asn-98, and Asn-217 each carry an N-linked (GlcNAc...) asparagine glycan.

This sequence belongs to the ZPS1 family.

The sequence is that of Protein ZPS1 (ZPS1) from Saccharomyces cerevisiae (strain ATCC 204508 / S288c) (Baker's yeast).